A 331-amino-acid chain; its full sequence is Fructose-1,6-bisphosphatase class 1 (331 aa).

Mg(2+)-binding residues include glutamate 100, aspartate 120, leucine 122, and aspartate 123. Residues aspartate 123 to serine 126, asparagine 216, tyrosine 243, tyrosine 261 to tyrosine 263, and lysine 273 contribute to the substrate site. Residue glutamate 279 coordinates Mg(2+).

Belongs to the FBPase class 1 family. As to quaternary structure, homotetramer. Mg(2+) is required as a cofactor.

The protein resides in the cytoplasm. It carries out the reaction beta-D-fructose 1,6-bisphosphate + H2O = beta-D-fructose 6-phosphate + phosphate. The protein operates within carbohydrate biosynthesis; gluconeogenesis. This chain is Fructose-1,6-bisphosphatase class 1, found in Amoebophilus asiaticus (strain 5a2).